Consider the following 474-residue polypeptide: 3-isopropylmalate dehydratase large subunit (474 aa).

Cysteine 355, cysteine 415, and cysteine 418 together coordinate [4Fe-4S] cluster.

The protein belongs to the aconitase/IPM isomerase family. LeuC type 1 subfamily. As to quaternary structure, heterodimer of LeuC and LeuD. The cofactor is [4Fe-4S] cluster.

It carries out the reaction (2R,3S)-3-isopropylmalate = (2S)-2-isopropylmalate. The protein operates within amino-acid biosynthesis; L-leucine biosynthesis; L-leucine from 3-methyl-2-oxobutanoate: step 2/4. Catalyzes the isomerization between 2-isopropylmalate and 3-isopropylmalate, via the formation of 2-isopropylmaleate. The sequence is that of 3-isopropylmalate dehydratase large subunit from Shewanella oneidensis (strain ATCC 700550 / JCM 31522 / CIP 106686 / LMG 19005 / NCIMB 14063 / MR-1).